The chain runs to 60 residues: MSKGTPSMGKRNKKTHIACRRCGSISYHARHKVCSACGFGRTSKLRSYKWTTKRSKIPTH.

Residues C19, C22, C34, and C37 each contribute to the Zn(2+) site. The C4-type zinc-finger motif lies at 19-37 (CRRCGSISYHARHKVCSAC).

This sequence belongs to the eukaryotic ribosomal protein eL37 family. Zn(2+) is required as a cofactor.

Binds to the 23S rRNA. The chain is Large ribosomal subunit protein eL37 from Methanosphaerula palustris (strain ATCC BAA-1556 / DSM 19958 / E1-9c).